Consider the following 159-residue polypeptide: MDITFIDETEKVPTEEIKEIENLLQFAAGFLEIAEDTEMSVTFTDNAGIQMINRDYRGKDMPTDVISFALEDEGEDELPIIFDDEELAELPRNLGDLIISTERAAEQAVEYGHTLEREMGFLAVHGFLHLNGYDHMEPEDEKEMFGLQKEILDAYGLKR.

3 residues coordinate Zn(2+): His125, His129, and His135.

It belongs to the endoribonuclease YbeY family. Zn(2+) serves as cofactor.

It localises to the cytoplasm. Functionally, single strand-specific metallo-endoribonuclease involved in late-stage 70S ribosome quality control and in maturation of the 3' terminus of the 16S rRNA. The sequence is that of Endoribonuclease YbeY from Enterococcus faecalis (strain ATCC 700802 / V583).